The following is a 125-amino-acid chain: uncharacterized protein (125 aa).

Transmembrane regions (helical) follow at residues 9–29 (IANAGALAVAVWLLDKITLTG), 33–53 (GEKTLTLIVVALVFGLVNMVV), 56–76 (IVQVLTFPLFILTLGLFTLVV), and 100–120 (FWTAVLGGLIVSIVSWALNAF).

The protein localises to the cell membrane. This is an uncharacterized protein from Streptomyces coelicolor (strain ATCC BAA-471 / A3(2) / M145).